The following is a 280-amino-acid chain: Myelin proteolipid protein B (280 aa).

At 1–10 (MGWHDGCIRC) the chain is on the cytoplasmic side. S-palmitoyl cysteine attachment occurs at residues C7 and C10. The chain crosses the membrane as a helical span at residues 11-36 (MVGVPFASVIATVLCFAGVALFCGCG). Topologically, residues 37 to 59 (HEALSGTEKLIETYFSKNYQEYE) are extracellular. The chain crosses the membrane as a helical span at residues 60-88 (YLIHVINAFQYVIYGIAIFFFLYGILLLA). The Cytoplasmic portion of the chain corresponds to 89 to 152 (EGFYTTTAIK…LGKWLGHPDK (64 aa)). 2 S-palmitoyl cysteine lipidation sites follow: C140 and C142. Residues 153–179 (FVGVTYVITILWILIFACSAVPVYIYF) traverse the membrane as a helical segment. Over 180–239 (NTWVTCQSIAFPGKTTTSVSTLCLDARMYGVLPWNAFPGKVCGTSLLAICKTSEFQMTFH) the chain is Extracellular. Disulfide bonds link C185/C229 and C202/C221. A helical transmembrane segment spans residues 240 to 269 (LFIAAFVGAAATLVALLTYMVGASFNYAVL). The Cytoplasmic portion of the chain corresponds to 270 to 280 (RVTGRSDRSKF).

This sequence belongs to the myelin proteolipid protein family.

Its subcellular location is the cell membrane. Its function is as follows. This is the major myelin protein from the central nervous system. It plays an important role in the formation or maintenance of the multilamellar structure of myelin. This chain is Myelin proteolipid protein B (plp1-b), found in Xenopus laevis (African clawed frog).